Here is a 274-residue protein sequence, read N- to C-terminus: Penicillin-insensitive murein endopeptidase (274 aa).

A signal peptide spans 1–19 (MKKTAIALLAWFVSSASLA). 3 cysteine pairs are disulfide-bonded: Cys-44–Cys-265, Cys-187–Cys-235, and Cys-216–Cys-223. Zn(2+)-binding residues include His-110, His-113, Asp-120, Asp-147, His-150, and His-211. The segment at 225–274 (DQPLPPPGDGCGAELQSWFEPPKPGTTKPEKKTPPPLPPSCQALLDEHVL) is disordered.

Belongs to the peptidase M74 family. Dimer. The cofactor is Zn(2+).

The protein localises to the periplasm. Murein endopeptidase that cleaves the D-alanyl-meso-2,6-diamino-pimelyl amide bond that connects peptidoglycan strands. Likely plays a role in the removal of murein from the sacculus. This Salmonella heidelberg (strain SL476) protein is Penicillin-insensitive murein endopeptidase.